The sequence spans 335 residues: Beta-ketoacyl-[acyl-carrier-protein] synthase III (335 aa).

Catalysis depends on residues cysteine 119 and histidine 261. The segment at 262 to 266 (QANQR) is ACP-binding. Asparagine 291 is an active-site residue.

It belongs to the thiolase-like superfamily. FabH family. Homodimer.

The protein localises to the cytoplasm. The enzyme catalyses malonyl-[ACP] + acetyl-CoA + H(+) = 3-oxobutanoyl-[ACP] + CO2 + CoA. It participates in lipid metabolism; fatty acid biosynthesis. Its function is as follows. Catalyzes the condensation reaction of fatty acid synthesis by the addition to an acyl acceptor of two carbons from malonyl-ACP. Catalyzes the first condensation reaction which initiates fatty acid synthesis and may therefore play a role in governing the total rate of fatty acid production. Possesses both acetoacetyl-ACP synthase and acetyl transacylase activities. Its substrate specificity determines the biosynthesis of branched-chain and/or straight-chain of fatty acids. The polypeptide is Beta-ketoacyl-[acyl-carrier-protein] synthase III (Prochlorococcus marinus (strain MIT 9215)).